Reading from the N-terminus, the 83-residue chain is Small ribosomal subunit protein bS18A (83 aa).

Belongs to the bacterial ribosomal protein bS18 family. In terms of assembly, part of the 30S ribosomal subunit. Forms a tight heterodimer with protein bS6.

Functionally, binds as a heterodimer with protein bS6 to the central domain of the 16S rRNA, where it helps stabilize the platform of the 30S subunit. This chain is Small ribosomal subunit protein bS18A, found in Mycolicibacterium vanbaalenii (strain DSM 7251 / JCM 13017 / BCRC 16820 / KCTC 9966 / NRRL B-24157 / PYR-1) (Mycobacterium vanbaalenii).